Here is a 257-residue protein sequence, read N- to C-terminus: Protein YIPF5 (257 aa).

The Cytoplasmic segment spans residues 1–124; sequence MSGFDNFNTD…KASDGSIMNE (124 aa). Residues 125–145 traverse the membrane as a helical segment; that stretch reads TDLAGPMVFCLAFGATLLLTG. A topological domain (lumenal) is located at residue Lys-146. A helical membrane pass occupies residues 147-167; sequence IQFGYVYGISAIGCLGMYCLL. The Cytoplasmic segment spans residues 168 to 173; sequence NLMSMT. A helical transmembrane segment spans residues 174–194; that stretch reads GVSFGCVASVLGYCLLPMIIL. Residues 195–196 lie on the Lumenal side of the membrane; that stretch reads SS. The helical transmembrane segment at 197-217 threads the bilayer; that stretch reads FGVIFSLQGIMGIILTAAIIG. At 218-236 the chain is on the cytoplasmic side; it reads WCSLSASKIFISALAMDGQ. The chain crosses the membrane as a helical span at residues 237-257; it reads QLLVAYPCALLYGVFALISVF.

It belongs to the YIP1 family.

It is found in the endoplasmic reticulum membrane. The protein localises to the golgi apparatus. Its subcellular location is the cis-Golgi network membrane. Functionally, plays a role in transport between endoplasmic reticulum and Golgi. This is Protein YIPF5 (yipf5) from Danio rerio (Zebrafish).